Consider the following 275-residue polypeptide: Large ribosomal subunit protein uL2 (275 aa).

Residues 221–275 form a disordered region; it reads RGMTMNPVDHPMGGGEGRSKGHIPQSPWGIPAKGYKTRKSKKPSDKLIVKRRKQK.

It belongs to the universal ribosomal protein uL2 family. Part of the 50S ribosomal subunit. Forms a bridge to the 30S subunit in the 70S ribosome.

In terms of biological role, one of the primary rRNA binding proteins. Required for association of the 30S and 50S subunits to form the 70S ribosome, for tRNA binding and peptide bond formation. It has been suggested to have peptidyltransferase activity; this is somewhat controversial. Makes several contacts with the 16S rRNA in the 70S ribosome. The protein is Large ribosomal subunit protein uL2 of Kosmotoga olearia (strain ATCC BAA-1733 / DSM 21960 / TBF 19.5.1).